We begin with the raw amino-acid sequence, 73 residues long: Sec-independent protein translocase protein TatA (73 aa).

Residues 1 to 21 (MGSFSIWHWLIVLVIVMLVFG) form a helical membrane-spanning segment. Residues 50-73 (KEQIQQSSATAEKTVDVQAKDVNK) form a disordered region. Basic and acidic residues predominate over residues 62-73 (KTVDVQAKDVNK).

The protein belongs to the TatA/E family. In terms of assembly, the Tat system comprises two distinct complexes: a TatABC complex, containing multiple copies of TatA, TatB and TatC subunits, and a separate TatA complex, containing only TatA subunits. Substrates initially bind to the TatABC complex, which probably triggers association of the separate TatA complex to form the active translocon.

Its subcellular location is the cell inner membrane. Its function is as follows. Part of the twin-arginine translocation (Tat) system that transports large folded proteins containing a characteristic twin-arginine motif in their signal peptide across membranes. TatA could form the protein-conducting channel of the Tat system. The protein is Sec-independent protein translocase protein TatA of Polynucleobacter necessarius subsp. necessarius (strain STIR1).